Here is a 458-residue protein sequence, read N- to C-terminus: Monomethylamine methyltransferase MtmB1 (458 aa).

A non-standard amino acid (pyrrolysine) is located at residue pyrrolysine 202.

The protein belongs to the monomethylamine methyltransferase family. In terms of assembly, can form a complex with MtmC.

It carries out the reaction Co(I)-[methylamine-specific corrinoid protein] + methylamine + H(+) = methyl-Co(III)-[methylamine-specific corrinoid protein] + NH4(+). Its pathway is one-carbon metabolism; methanogenesis from methylamine. Catalyzes the transfer of the methyl group from monomethylamine to the corrinoid cofactor of MtmC. This is Monomethylamine methyltransferase MtmB1 (mtmB1) from Methanosarcina acetivorans (strain ATCC 35395 / DSM 2834 / JCM 12185 / C2A).